The sequence spans 291 residues: BTB/POZ domain-containing protein 19 (291 aa).

The BTB domain maps to 29-98 (SDVCFVVGQE…LYTNSVKLYR (70 aa)). The 101-residue stretch at 134 to 234 (CEALQVAVTF…LALLAPAELS (101 aa)) folds into the BACK domain.

This chain is BTB/POZ domain-containing protein 19 (BTBD19), found in Homo sapiens (Human).